We begin with the raw amino-acid sequence, 376 residues long: Glutamate 5-kinase (376 aa).

ATP is bound at residue lysine 18. Serine 58, aspartate 145, and asparagine 157 together coordinate substrate. ATP-binding positions include 177 to 178 (SD) and 218 to 224 (TGGMASK). The PUA domain maps to 280-358 (TGALTLDAGA…SELPGELRRP (79 aa)).

Belongs to the glutamate 5-kinase family.

It localises to the cytoplasm. The catalysed reaction is L-glutamate + ATP = L-glutamyl 5-phosphate + ADP. The protein operates within amino-acid biosynthesis; L-proline biosynthesis; L-glutamate 5-semialdehyde from L-glutamate: step 1/2. Its function is as follows. Catalyzes the transfer of a phosphate group to glutamate to form L-glutamate 5-phosphate. This is Glutamate 5-kinase from Mycobacterium tuberculosis (strain CDC 1551 / Oshkosh).